The sequence spans 234 residues: MRSGEELDGFEGEASSTSMISGASSPYQPTTEPVSQRRGLAGLRCDPDYLRGALGRLKVAQVILALIAFICIETIMACSPCEGLYFFEFVSCSAFVVTGVLLIMFSLNLHMRIPQINWNLTDLVNTGLSAFLFFIASIVLAALNHRAGAEIAAVIFGFLATAAYAVNTFLAVQKWRVSVRQQSTNDYIRARTESRDVDSRPEIQRLDTFSYSTNVTVRKKSPTNLLSLNHWQLA.

The span at 1–11 shows a compositional bias: acidic residues; that stretch reads MRSGEELDGFE. Residues 1-38 form a disordered region; the sequence is MRSGEELDGFEGEASSTSMISGASSPYQPTTEPVSQRR. Over residues 15–25 the composition is skewed to low complexity; sequence SSTSMISGASS. One can recognise an MARVEL domain in the interval 49–176; it reads YLRGALGRLK…NTFLAVQKWR (128 aa). 4 consecutive transmembrane segments (helical) span residues 59-79, 85-105, 123-143, and 151-171; these read VAQVILALIAFICIETIMACS, YFFEFVSCSAFVVTGVLLIMF, LVNTGLSAFLFFIASIVLAAL, and IAAVIFGFLATAAYAVNTFLA. Serine 194 is subject to Phosphoserine.

The protein belongs to the chemokine-like factor family. Interacts with PD-L1/CD274 and CMTM6. In terms of tissue distribution, highly expressed in testis and prostate.

The protein localises to the membrane. Functionally, acts as a backup for CMTM6 to regulate plasma membrane expression of PD-L1/CD274, an immune inhibitory ligand critical for immune tolerance to self and antitumor immunity. May protect PD-L1/CD274 from being polyubiquitinated and targeted for degradation. The sequence is that of CKLF-like MARVEL transmembrane domain-containing protein 4 from Homo sapiens (Human).